Reading from the N-terminus, the 299-residue chain is Glutamyl-Q tRNA(Asp) synthetase (299 aa).

L-glutamate is bound by residues 9-13 and Glu45; that span reads RFAPS. The 'HIGH' region motif lies at 12–22; it reads PSPTGPLHFGS. 3 residues coordinate Zn(2+): Cys101, Cys103, and Cys118. Residues Tyr170 and Arg188 each contribute to the L-glutamate site. A 'KMSKS' region motif is present at residues 226–230; it reads KLSKS. Lys229 provides a ligand contact to ATP.

It belongs to the class-I aminoacyl-tRNA synthetase family. GluQ subfamily. Zn(2+) serves as cofactor.

Catalyzes the tRNA-independent activation of glutamate in presence of ATP and the subsequent transfer of glutamate onto a tRNA(Asp). Glutamate is transferred on the 2-amino-5-(4,5-dihydroxy-2-cyclopenten-1-yl) moiety of the queuosine in the wobble position of the QUC anticodon. The protein is Glutamyl-Q tRNA(Asp) synthetase of Xanthomonas axonopodis pv. citri (strain 306).